Consider the following 155-residue polypeptide: SsrA-binding protein (155 aa).

This sequence belongs to the SmpB family.

The protein localises to the cytoplasm. Functionally, required for rescue of stalled ribosomes mediated by trans-translation. Binds to transfer-messenger RNA (tmRNA), required for stable association of tmRNA with ribosomes. tmRNA and SmpB together mimic tRNA shape, replacing the anticodon stem-loop with SmpB. tmRNA is encoded by the ssrA gene; the 2 termini fold to resemble tRNA(Ala) and it encodes a 'tag peptide', a short internal open reading frame. During trans-translation Ala-aminoacylated tmRNA acts like a tRNA, entering the A-site of stalled ribosomes, displacing the stalled mRNA. The ribosome then switches to translate the ORF on the tmRNA; the nascent peptide is terminated with the 'tag peptide' encoded by the tmRNA and targeted for degradation. The ribosome is freed to recommence translation, which seems to be the essential function of trans-translation. The polypeptide is SsrA-binding protein (Clostridium acetobutylicum (strain ATCC 824 / DSM 792 / JCM 1419 / IAM 19013 / LMG 5710 / NBRC 13948 / NRRL B-527 / VKM B-1787 / 2291 / W)).